The sequence spans 234 residues: Glucosamine-6-phosphate deaminase (234 aa).

Aspartate 63 functions as the Proton acceptor; for enolization step in the catalytic mechanism. Asparagine 129 (for ring-opening step) is an active-site residue. The Proton acceptor; for ring-opening step role is filled by histidine 131. Glutamate 136 (for ring-opening step) is an active-site residue.

This sequence belongs to the glucosamine/galactosamine-6-phosphate isomerase family. NagB subfamily.

The enzyme catalyses alpha-D-glucosamine 6-phosphate + H2O = beta-D-fructose 6-phosphate + NH4(+). The protein operates within amino-sugar metabolism; N-acetylneuraminate degradation; D-fructose 6-phosphate from N-acetylneuraminate: step 5/5. Its function is as follows. Catalyzes the reversible isomerization-deamination of glucosamine 6-phosphate (GlcN6P) to form fructose 6-phosphate (Fru6P) and ammonium ion. In Listeria monocytogenes serovar 1/2a (strain ATCC BAA-679 / EGD-e), this protein is Glucosamine-6-phosphate deaminase.